The primary structure comprises 1059 residues: MIIEDFEALKHWLSKTLEPICDADPSALAKYVLALVKKDKSDRELNALCIDQLDVFLQKETQGFVDKLFDAINTKSYLPQPDSTSTAVVKLDSFEHQEKEIKKDEVNKEEEKEKKAPRRLNQSPQPSSTRHKDTRENRKRSNSDRESNSIQNSFRSGLPEQKQDVDAAPPRLNSNKVQNAKNTRSRDDRKRDDRFRKREYDRNVPRRDSYRDRYNRRRGRSRSYSRSRSRSWSKERQRDRDRSRSRTRSRDKDSGKPKFDLDRPDPVDNSYASGSSVPHIGSAHFPVPTLSSTITVITPSHHGNSSAENWPEFHEDQVDHSSYGRLQMQKKRCRDYDEKGFCMRGDMCPFDHGSDPVVVEDVNLPGILPFPAPPPVLEGPPPPGLPPPPSLLTPPPVNLQPPPVPPPGPLPPSLPPVTGPPPPLPPLQPAGMDAPPNSATSSVPTVVTTGILHPPPVPPSSLFPSAAAAAGPIPLFPETYEADGYNPEAPSMTTTSRPLYRHRVHAQRPNLIGLTSGDMDLPTPREKNNMRIVVDSESRKRNLGSGDCVLPSKKPWFDKSNFNNRMNPGFQKKPLFPNENTKLELRRIPPELNNISKLNEHFSKFGTIVNLQVAYKGDPEGALIQFATHGEAKKAISSTEAVLNNRFIRMYWHREGSSQQLQTPGLPKVVHLTVPQQPNLSVMKQSIKERLGPVPANNSEPSVAQNINTETTQNIAKVPVKERLGYMSKTVSAATEKVFSTSTGLTKTVYNPAALKAMQKSVLYPICNDNGDAQKKKQEALKLQQDVRKKKQEILEKRIETQKILISKLEKNKNMKSEDKAEILKTLETLTNSITKLRDELKAVSSTGNVVKNNKSKAQMQKELLDTELDLYNKIQAGDDVTELRKKYTELQLDAAKRGILSSGRGRGVHLRGRGVIRGRGRVLHGRGRGASVHAVVDHRPRALKISGFTEGDREYLLPHFAHFGEIEDCQIDDSSLHAIITFKTRAEAEAAAVHGAQFKGQDLKLAWNKPVPNASSTEVEDADQEEEEFHEDSIVDDSLLQDDDEEEEDDNESRSWRR.

2 stretches are compositionally biased toward basic and acidic residues: residues 98–114 (EKEI…EKEK) and 130–147 (RHKD…DRES). A disordered region spans residues 98 to 275 (EKEIKKDEVN…PVDNSYASGS (178 aa)). The span at 172 to 182 (LNSNKVQNAKN) shows a compositional bias: polar residues. Positions 184 to 213 (RSRDDRKRDDRFRKREYDRNVPRRDSYRDR) are enriched in basic and acidic residues. Residues 214–231 (YNRRRGRSRSYSRSRSRS) show a composition bias toward basic residues. A compositionally biased stretch (basic and acidic residues) spans 232-266 (WSKERQRDRDRSRSRTRSRDKDSGKPKFDLDRPDP). The C3H1-type zinc finger occupies 327-355 (QMQKKRCRDYDEKGFCMRGDMCPFDHGSD). Positions 375-428 (PVLEGPPPPGLPPPPSLLTPPPVNLQPPPVPPPGPLPPSLPPVTGPPPPLPPLQ) are enriched in pro residues. Residues 375–443 (PVLEGPPPPG…APPNSATSSV (69 aa)) form a disordered region. The span at 434–443 (APPNSATSSV) shows a compositional bias: low complexity. In terms of domain architecture, RRM 1 spans 581 to 655 (TKLELRRIPP…RFIRMYWHRE (75 aa)). Residues 771-873 (GDAQKKKQEA…LLDTELDLYN (103 aa)) adopt a coiled-coil conformation. Residues 942-1011 (RALKISGFTE…QDLKLAWNKP (70 aa)) form the RRM 2 domain. The segment at 1010–1059 (KPVPNASSTEVEDADQEEEEFHEDSIVDDSLLQDDDEEEEDDNESRSWRR) is disordered. Composition is skewed to acidic residues over residues 1019 to 1031 (EVED…EEFH) and 1040 to 1052 (LLQD…EDDN).

Functionally, may be involved in the turnover of nuclear polyadenylated (pA+) RNA. The protein is RNA-binding protein 26 of Xenopus laevis (African clawed frog).